A 142-amino-acid polypeptide reads, in one-letter code: MAKKIDAYIKLQVKSGSANPSPPVGPALGQKGVNIMEFCKAFNARTEKMEKGMPIPVVITVYSDRSFTFETKTPPASYLLKTAAGLKSGSPRPNTQKVGTIARAKIQEIAELKAADMTGADVEAMTRSIEGTARSMGLVVEG.

Belongs to the universal ribosomal protein uL11 family. As to quaternary structure, part of the ribosomal stalk of the 50S ribosomal subunit. Interacts with L10 and the large rRNA to form the base of the stalk. L10 forms an elongated spine to which L12 dimers bind in a sequential fashion forming a multimeric L10(L12)X complex. Post-translationally, one or more lysine residues are methylated.

Its function is as follows. Forms part of the ribosomal stalk which helps the ribosome interact with GTP-bound translation factors. The protein is Large ribosomal subunit protein uL11 of Shewanella sp. (strain ANA-3).